Consider the following 1532-residue polypeptide: Glycogen debranching enzyme (1532 aa).

Phosphoserine is present on S64. Catalysis depends on residues D526, H529, and D627.

It belongs to the glycogen debranching enzyme family. Monomer. Interacts with NHLRC1/malin. Post-translationally, the N-terminus is blocked. Ubiquitinated. In terms of tissue distribution, liver, kidney and lymphoblastoid cells express predominantly isoform 1; whereas muscle and heart express not only isoform 1, but also muscle-specific isoform mRNAs (isoforms 2, 3 and 4). Isoforms 5 and 6 are present in both liver and muscle.

The protein resides in the cytoplasm. The catalysed reaction is Transfers a segment of a (1-&gt;4)-alpha-D-glucan to a new position in an acceptor, which may be glucose or a (1-&gt;4)-alpha-D-glucan.. It carries out the reaction Hydrolysis of (1-&gt;6)-alpha-D-glucosidic branch linkages in glycogen phosphorylase limit dextrin.. Functionally, multifunctional enzyme acting as 1,4-alpha-D-glucan:1,4-alpha-D-glucan 4-alpha-D-glycosyltransferase and amylo-1,6-glucosidase in glycogen degradation. This Homo sapiens (Human) protein is Glycogen debranching enzyme (AGL).